The chain runs to 553 residues: Dihydroxy-acid dehydratase (553 aa).

C49 provides a ligand contact to [2Fe-2S] cluster. D81 is a Mg(2+) binding site. A [2Fe-2S] cluster-binding site is contributed by C122. Mg(2+)-binding residues include D123 and K124. K124 bears the N6-carboxylysine mark. Position 194 (C194) interacts with [2Fe-2S] cluster. Residue E444 coordinates Mg(2+). S470 acts as the Proton acceptor in catalysis.

Belongs to the IlvD/Edd family. As to quaternary structure, homodimer. The cofactor is [2Fe-2S] cluster. It depends on Mg(2+) as a cofactor.

The enzyme catalyses (2R)-2,3-dihydroxy-3-methylbutanoate = 3-methyl-2-oxobutanoate + H2O. It catalyses the reaction (2R,3R)-2,3-dihydroxy-3-methylpentanoate = (S)-3-methyl-2-oxopentanoate + H2O. The protein operates within amino-acid biosynthesis; L-isoleucine biosynthesis; L-isoleucine from 2-oxobutanoate: step 3/4. Its pathway is amino-acid biosynthesis; L-valine biosynthesis; L-valine from pyruvate: step 3/4. Its function is as follows. Functions in the biosynthesis of branched-chain amino acids. Catalyzes the dehydration of (2R,3R)-2,3-dihydroxy-3-methylpentanoate (2,3-dihydroxy-3-methylvalerate) into 2-oxo-3-methylpentanoate (2-oxo-3-methylvalerate) and of (2R)-2,3-dihydroxy-3-methylbutanoate (2,3-dihydroxyisovalerate) into 2-oxo-3-methylbutanoate (2-oxoisovalerate), the penultimate precursor to L-isoleucine and L-valine, respectively. The chain is Dihydroxy-acid dehydratase from Aeropyrum pernix (strain ATCC 700893 / DSM 11879 / JCM 9820 / NBRC 100138 / K1).